A 653-amino-acid chain; its full sequence is Multidomain regulatory protein Rv1364c (653 aa).

Residues Thr-54 and Thr-81 each carry the phosphothreonine; by PknD modification. Residues 86–142 (SGSEWRLQTDYDGSGVEERYFDFVVTPRRRADGSIEGVQLIVDDVTSRVRARQAAEA) enclose the PAC domain. A PPM-type phosphatase domain is found at 177 to 396 (DIAAEYLVAA…DDVTLLAMQR (220 aa)). The Mn(2+) site is built by Asp-211 and Val-212. A Phosphothreonine; by PknD modification is found at Thr-299. Asp-328 and Asp-387 together coordinate Mn(2+). At Thr-390 the chain carries Phosphothreonine; by PknD. An anti-sigma factor kinase region region spans residues 397–544 (RAPTPPLHIT…TMVRRAAFQQ (148 aa)). At Ser-506 the chain carries Phosphoserine; by PknD. A phosphothreonine; by PknD mark is found at Thr-520 and Thr-568. The region spanning 546–653 (IDSEFVSLVE…ADTEDIFAQE (108 aa)) is the STAS domain. Position 600 is a phosphoserine; by autocatalysis (Ser-600).

As to quaternary structure, exists in solution as both monomer and dimer. Both the phosphorylated and unphosphorylated proteins form extended dimers. Interacts with SigF. Can efficiently bind to SigF independently of its autophosphorylation. Interaction between SigF and Rv1364c is reduced significantly upon the phosphorylation of both proteins by PknD. The cofactor is Mn(2+). It depends on Mg(2+) as a cofactor. Post-translationally, autophosphorylated. Phosphorylated by PknD on multiple threonine and serine residues. Phosphorylation is antagonized by the phosphatase activity.

The enzyme catalyses O-phospho-L-seryl-[protein] + H2O = L-seryl-[protein] + phosphate. The catalysed reaction is O-phospho-L-threonyl-[protein] + H2O = L-threonyl-[protein] + phosphate. It carries out the reaction L-seryl-[protein] + ATP = O-phospho-L-seryl-[protein] + ADP + H(+). It catalyses the reaction L-threonyl-[protein] + ATP = O-phospho-L-threonyl-[protein] + ADP + H(+). With respect to regulation, the phosphatase domain is activated by the anti-sigma factor kinase domain. Its function is as follows. Primarily acts as an independent SigF regulator that is sensitive to the osmosensory signal, mediating the cross talk of PknD with the SigF regulon. Possesses both phosphatase and kinase activities. The kinase domain functions as a classic anti-sigma factor-like kinase to phosphorylate the anti-anti-sigma factor domain at the canonical regulatory site, and the phosphatase domain antagonizes this activity. This Mycobacterium tuberculosis (strain ATCC 25618 / H37Rv) protein is Multidomain regulatory protein Rv1364c.